A 178-amino-acid polypeptide reads, in one-letter code: ATP-dependent protease subunit HslV (178 aa).

Thr7 is an active-site residue. Na(+) is bound by residues Gly162, Cys165, and Thr168.

This sequence belongs to the peptidase T1B family. HslV subfamily. A double ring-shaped homohexamer of HslV is capped on each side by a ring-shaped HslU homohexamer. The assembly of the HslU/HslV complex is dependent on binding of ATP.

The protein localises to the cytoplasm. The enzyme catalyses ATP-dependent cleavage of peptide bonds with broad specificity.. Its activity is regulated as follows. Allosterically activated by HslU binding. Functionally, protease subunit of a proteasome-like degradation complex believed to be a general protein degrading machinery. This Cupriavidus metallidurans (strain ATCC 43123 / DSM 2839 / NBRC 102507 / CH34) (Ralstonia metallidurans) protein is ATP-dependent protease subunit HslV.